The primary structure comprises 181 residues: MKQILDFIPLIIFFALYKMYDIYTATGALIIATAIQLVVTYALYKKVEKMQLITFIMVTVFGGMTIFLHDDNFIKWKVTIVYCVFAAGLIIAHILGKPVIKGMLGKEVTLPDDKWTKINHAWVLFFTVCAIANLYVAFEMPLDVWVNFKVFGLLGLTFLYTLFTGMYVYKHMPKEKKEEQE.

Transmembrane regions (helical) follow at residues 22-42 (IYTATGALIIATAIQLVVTYA), 50-70 (MQLITFIMVTVFGGMTIFLHD), 80-100 (IVYCVFAAGLIIAHILGKPVI), 122-142 (WVLFFTVCAIANLYVAFEMPL), and 148-168 (FKVFGLLGLTFLYTLFTGMYV).

The protein belongs to the YciB family.

The protein resides in the cell inner membrane. Functionally, plays a role in cell envelope biogenesis, maintenance of cell envelope integrity and membrane homeostasis. This is Inner membrane-spanning protein YciB from Aliivibrio fischeri (strain ATCC 700601 / ES114) (Vibrio fischeri).